Reading from the N-terminus, the 144-residue chain is Large ribosomal subunit protein uL11 (144 aa).

It belongs to the universal ribosomal protein uL11 family. As to quaternary structure, part of the ribosomal stalk of the 50S ribosomal subunit. Interacts with L10 and the large rRNA to form the base of the stalk. L10 forms an elongated spine to which L12 dimers bind in a sequential fashion forming a multimeric L10(L12)X complex. One or more lysine residues are methylated.

Its function is as follows. Forms part of the ribosomal stalk which helps the ribosome interact with GTP-bound translation factors. The polypeptide is Large ribosomal subunit protein uL11 (Neisseria meningitidis serogroup C (strain 053442)).